We begin with the raw amino-acid sequence, 437 residues long: Eukaryotic peptide chain release factor subunit 1 (437 aa).

This sequence belongs to the eukaryotic release factor 1 family. In terms of assembly, heterodimer of two subunits, one of which binds GTP.

The protein resides in the cytoplasm. In terms of biological role, directs the termination of nascent peptide synthesis (translation) in response to the termination codons UAA and possibly also UAG and UGA. The chain is Eukaryotic peptide chain release factor subunit 1 (eRF1) from Didinium nasutum.